The sequence spans 515 residues: Phenylalanine--tRNA ligase beta subunit (515 aa).

Residues 263–334 enclose the B5 domain; it reads HEYVKIYVDE…IVMGYNQMPR (72 aa). Residues N312, D318, E321, and D322 each coordinate Mg(2+).

Belongs to the phenylalanyl-tRNA synthetase beta subunit family. Type 2 subfamily. As to quaternary structure, tetramer of two alpha and two beta subunits. Mg(2+) is required as a cofactor.

The protein localises to the cytoplasm. The catalysed reaction is tRNA(Phe) + L-phenylalanine + ATP = L-phenylalanyl-tRNA(Phe) + AMP + diphosphate + H(+). In Pyrobaculum aerophilum (strain ATCC 51768 / DSM 7523 / JCM 9630 / CIP 104966 / NBRC 100827 / IM2), this protein is Phenylalanine--tRNA ligase beta subunit.